A 61-amino-acid chain; its full sequence is Weak toxin CM-2 (61 aa).

4 disulfides stabilise this stretch: cysteine 3–cysteine 21, cysteine 14–cysteine 37, cysteine 41–cysteine 53, and cysteine 54–cysteine 59.

This sequence belongs to the three-finger toxin family. Short-chain subfamily. Orphan group VI sub-subfamily. Expressed by the venom gland.

It is found in the secreted. The chain is Weak toxin CM-2 from Naja haje haje (Egyptian cobra).